A 527-amino-acid chain; its full sequence is DNA polymerase epsilon subunit 2 (527 aa).

This sequence belongs to the DNA polymerase epsilon subunit B family. In terms of assembly, component of the DNA polymerase epsilon complex consisting of four subunits: the catalytic subunit POLE and the accessory subunits POLE2, POLE3 and POLE4.

The protein localises to the nucleus. In terms of biological role, accessory component of the DNA polymerase epsilon complex. Participates in DNA repair and in chromosomal DNA replication. This chain is DNA polymerase epsilon subunit 2, found in Homo sapiens (Human).